We begin with the raw amino-acid sequence, 376 residues long: 1-deoxy-D-xylulose 5-phosphate reductoisomerase (376 aa).

Positions 12, 13, 14, 15, 39, 40, and 110 each coordinate NADPH. 1-deoxy-D-xylulose 5-phosphate is bound at residue Lys111. Glu112 is a binding site for NADPH. Asp136 provides a ligand contact to Mn(2+). 1-deoxy-D-xylulose 5-phosphate contacts are provided by Ser137, Glu138, Ser162, and His185. Glu138 lines the Mn(2+) pocket. Gly191 is an NADPH binding site. 4 residues coordinate 1-deoxy-D-xylulose 5-phosphate: Ser198, Asn203, Lys204, and Glu207. Residue Glu207 coordinates Mn(2+).

Belongs to the DXR family. Mg(2+) serves as cofactor. Requires Mn(2+) as cofactor.

It carries out the reaction 2-C-methyl-D-erythritol 4-phosphate + NADP(+) = 1-deoxy-D-xylulose 5-phosphate + NADPH + H(+). The protein operates within isoprenoid biosynthesis; isopentenyl diphosphate biosynthesis via DXP pathway; isopentenyl diphosphate from 1-deoxy-D-xylulose 5-phosphate: step 1/6. Functionally, catalyzes the NADPH-dependent rearrangement and reduction of 1-deoxy-D-xylulose-5-phosphate (DXP) to 2-C-methyl-D-erythritol 4-phosphate (MEP). In Treponema pallidum (strain Nichols), this protein is 1-deoxy-D-xylulose 5-phosphate reductoisomerase.